The chain runs to 390 residues: Nuclear receptor subfamily 2 group F member 6 (390 aa).

A compositionally biased stretch (gly residues) spans 1-15 (MAMVTGGWGDPGGDT). The tract at residues 1 to 50 (MAMVTGGWGDPGGDTNGVDKAGGSYPRATEDDSASPPGATSDAEPGDEER) is disordered. A phosphoserine mark is found at S35 and S41. A DNA-binding region (nuclear receptor) is located at residues 54–129 (QVDCVVCGDK…VGMRKEAVQR (76 aa)). The NR C4-type zinc-finger motif lies at 57 to 77 (CVVCGDKSSGKHYGVFTCEGC). Residue S84 is modified to Phosphoserine. An NR C4-type zinc finger spans residues 93–117 (CRSNRDCQIDQHHRNQCQYCRLKKC). Residues 157-380 (PVSELIAQLL…TLIRDMLLSG (224 aa)) form the NR LBD domain. Residues 314–390 (LQEKAQVALT…STFNWPYGSG (77 aa)) are important for dimerization.

This sequence belongs to the nuclear hormone receptor family. NR2 subfamily. As to quaternary structure, binds DNA as dimer; homodimer and heterodimer with NR2F2 and probably NR2F1. Interacts with THRB.

The protein localises to the nucleus. Its function is as follows. Transcription factor predominantly involved in transcriptional repression. Binds to promoter/enhancer response elements that contain the imperfect 5'-AGGTCA-3' direct or inverted repeats with various spacings which are also recognized by other nuclear hormone receptors. Involved in modulation of hormonal responses. Represses transcriptional activity of the lutropin-choriogonadotropic hormone receptor/LHCGR gene, the renin/REN gene and the oxytocin-neurophysin/OXT gene. Represses the triiodothyronine-dependent and -independent transcriptional activity of the thyroid hormone receptor gene in a cell type-specific manner. The corepressing function towards thyroid hormone receptor beta/THRB involves at least in part the inhibition of THRB binding to triiodothyronine response elements (TREs) by NR2F6. Inhibits NFATC transcription factor DNA binding and subsequently its transcriptional activity. Acts as transcriptional repressor of IL-17 expression in Th-17 differentiated CD4(+) T cells and may be involved in induction and/or maintenance of peripheral immunological tolerance and autoimmunity. Involved in development of forebrain circadian clock; is required early in the development of the locus coeruleus (LC). In Mus musculus (Mouse), this protein is Nuclear receptor subfamily 2 group F member 6 (Nr2f6).